The primary structure comprises 430 residues: Adenylosuccinate synthetase (430 aa).

GTP is bound by residues 13–19 and 41–43; these read GDEGKGK and GHT. Asp-14 functions as the Proton acceptor in the catalytic mechanism. Asp-14 and Gly-41 together coordinate Mg(2+). IMP-binding positions include 14 to 17, 39 to 42, Thr-130, Arg-144, Gln-225, Thr-240, and Arg-304; these read DEGK and NAGH. Catalysis depends on His-42, which acts as the Proton donor. Position 300–306 (300–306) interacts with substrate; that stretch reads ATTGRAR. Residues Arg-306, 332-334, and 414-416 each bind GTP; these read KLD and STG.

This sequence belongs to the adenylosuccinate synthetase family. Homodimer. Mg(2+) is required as a cofactor.

The protein resides in the cytoplasm. The catalysed reaction is IMP + L-aspartate + GTP = N(6)-(1,2-dicarboxyethyl)-AMP + GDP + phosphate + 2 H(+). It participates in purine metabolism; AMP biosynthesis via de novo pathway; AMP from IMP: step 1/2. Functionally, plays an important role in the de novo pathway of purine nucleotide biosynthesis. Catalyzes the first committed step in the biosynthesis of AMP from IMP. This is Adenylosuccinate synthetase from Pseudomonas syringae pv. tomato (strain ATCC BAA-871 / DC3000).